A 230-amino-acid polypeptide reads, in one-letter code: MSPISNFARIALACTVAALLGGCVIAGDVRPYPAMAPIQPIMPPQAEPTAGAIYAAGPTLQLYSDRRARDVGDLLTITLLENTTAQTSANTATNKESNLSLGTPSILGAPVTLGGKDILSATAKGARDFTGKGNSAQSNRLQGSVTVTVIQRLPNGNLVVQGQKNLRLNQGDELVQVQGIVRPGDISQDNTIPSSRVAEARIVYGGRGPVAQSNAMGWLSRFFNSGLTPF.

A signal peptide spans Met1–Gly22. A lipid anchor (N-palmitoyl cysteine) is attached at Cys23. Cys23 is lipidated: S-diacylglycerol cysteine.

The protein belongs to the FlgH family. As to quaternary structure, the basal body constitutes a major portion of the flagellar organelle and consists of four rings (L,P,S, and M) mounted on a central rod.

It is found in the cell outer membrane. Its subcellular location is the bacterial flagellum basal body. Assembles around the rod to form the L-ring and probably protects the motor/basal body from shearing forces during rotation. This is Flagellar L-ring protein from Stenotrophomonas maltophilia (strain K279a).